Here is a 329-residue protein sequence, read N- to C-terminus: Olfactory receptor 5AL1 (329 aa).

Residues 1-44 (MCALKGFLEENFYTYSVAKGNHSTVYEFILLGLTDNAELQVTLF) are Extracellular-facing. The N-linked (GlcNAc...) asparagine glycan is linked to Asn-21. Residues 45 to 65 (GIFLVVYLASFMGNFGLIMLI) form a helical membrane-spanning segment. The Cytoplasmic portion of the chain corresponds to 66–73 (QISPQLHT). A helical membrane pass occupies residues 74 to 94 (PMYFFLSHLAFVDFSFTSSVA). Over 95–113 (PNTLVNFLCEVKSITFYAC) the chain is Extracellular. Cys-113 and Cys-205 form a disulfide bridge. Residues 114–134 (AIQVCCFITFVVCELYLLSIM) traverse the membrane as a helical segment. At 135–157 (AYDRYVAICNPLLYVILIPRKLC) the chain is on the cytoplasmic side. The helical transmembrane segment at 158-178 (IKLIASTYVYGFTVGLVQTVA) threads the bilayer. At 179-220 (TSYLSFCDSNVINHFYHDDVPLVALACSDTHVKELMLLIIAG) the chain is on the extracellular side. The chain crosses the membrane as a helical span at residues 221–241 (FNTLCSLVIVLISYGFIFFAI). Topologically, residues 242 to 253 (LRIHSAEGRQKA) are cytoplasmic. A helical transmembrane segment spans residues 254–274 (FSTSASHLTSITIFYGTIIFM). The Extracellular portion of the chain corresponds to 275–287 (YPQPKSSHSLNMD). A helical transmembrane segment spans residues 288-308 (KVASVFNVVVIPTLNPLIYSL). Over 309 to 329 (RNQEVKNALKRIIEKLCLAVK) the chain is Cytoplasmic.

Belongs to the G-protein coupled receptor 1 family.

The protein resides in the cell membrane. Functionally, odorant receptor. This Homo sapiens (Human) protein is Olfactory receptor 5AL1 (OR5AL1).